The chain runs to 323 residues: tRNA U34 carboxymethyltransferase (323 aa).

Carboxy-S-adenosyl-L-methionine contacts are provided by residues Lys-91, Trp-105, Lys-110, Gly-130, 152 to 154 (DPT), 181 to 182 (IE), Met-196, Tyr-200, and Arg-315.

The protein belongs to the class I-like SAM-binding methyltransferase superfamily. CmoB family. In terms of assembly, homotetramer.

The enzyme catalyses carboxy-S-adenosyl-L-methionine + 5-hydroxyuridine(34) in tRNA = 5-carboxymethoxyuridine(34) in tRNA + S-adenosyl-L-homocysteine + H(+). In terms of biological role, catalyzes carboxymethyl transfer from carboxy-S-adenosyl-L-methionine (Cx-SAM) to 5-hydroxyuridine (ho5U) to form 5-carboxymethoxyuridine (cmo5U) at position 34 in tRNAs. This Shigella dysenteriae serotype 1 (strain Sd197) protein is tRNA U34 carboxymethyltransferase.